Here is a 317-residue protein sequence, read N- to C-terminus: Tumor-associated calcium signal transducer 2 (317 aa).

The signal sequence occupies residues 1 to 24; sequence MARGLDLAPLLLLLLAMVAGFCTA. The Extracellular segment spans residues 25 to 270; sequence QINCTCPTNK…QFSMKRLTTG (246 aa). N-linked (GlcNAc...) asparagine glycosylation occurs at asparagine 27. The Thyroglobulin type-1 domain maps to 64–139; it reads TSKCLLLKAR…TDKGDQSLRC (76 aa). 3 disulfide bridges follow: cysteine 67-cysteine 102, cysteine 113-cysteine 119, and cysteine 121-cysteine 139. A glycan (N-linked (GlcNAc...) asparagine) is linked at asparagine 114. Asparagine 162 and asparagine 202 each carry an N-linked (GlcNAc...) asparagine glycan. The chain crosses the membrane as a helical span at residues 271-291; it reads LIAVIAVVAVALVAGVVVLVV. The Cytoplasmic segment spans residues 292-317; it reads TNRRKSGKYKKVELKELGEMRSEPSL.

This sequence belongs to the EPCAM family.

It localises to the membrane. In terms of biological role, may function as a growth factor receptor. The protein is Tumor-associated calcium signal transducer 2 (Tacstd2) of Rattus norvegicus (Rat).